Reading from the N-terminus, the 317-residue chain is Olfactory receptor 1082 (317 aa).

Residues Met-1 to Phe-26 lie on the Extracellular side of the membrane. The N-linked (GlcNAc...) asparagine glycan is linked to Asn-5. The chain crosses the membrane as a helical span at residues Leu-27–Ile-51. Over Thr-52–Thr-58 the chain is Cytoplasmic. A helical membrane pass occupies residues Pro-59–Pro-80. Topologically, residues Lys-81–Gln-101 are extracellular. Cys-98 and Cys-190 are joined by a disulfide. Residues Met-102–Tyr-121 traverse the membrane as a helical segment. Residues Asp-122–Arg-140 are Cytoplasmic-facing. Residues Leu-141–Ile-159 form a helical membrane-spanning segment. Residues Gln-160–His-197 lie on the Extracellular side of the membrane. The chain crosses the membrane as a helical span at residues Leu-198–Phe-220. Topologically, residues Lys-221–Lys-237 are cytoplasmic. A helical transmembrane segment spans residues Ala-238–Val-261. Residues Ser-262–Ala-273 lie on the Extracellular side of the membrane. A helical transmembrane segment spans residues Ser-274–Leu-293. Residues Arg-294–Gly-317 are Cytoplasmic-facing.

It belongs to the G-protein coupled receptor 1 family. In terms of tissue distribution, olfactory epithelium.

The protein resides in the cell membrane. Its function is as follows. Odorant receptor. This Rattus norvegicus (Rat) protein is Olfactory receptor 1082 (Olr1082).